A 368-amino-acid chain; its full sequence is Probable magnesium transporter NIPA3 (368 aa).

Residues 1-18 (MASLSGSWRDAYKGMSSD) lie on the Extracellular side of the membrane. Residues 19–39 (NIKGLVLALSSSLFIGASFIV) form a helical membrane-spanning segment. Residues 40–66 (KKKGLKRAGASGLRAGSGGYSYLLEPL) lie on the Cytoplasmic side of the membrane. A helical transmembrane segment spans residues 67–87 (WWVGMITMIVGEIANFAAYAF). Residues 88–90 (APA) are Extracellular-facing. A helical membrane pass occupies residues 91-111 (ILVTPLGALSIIISAALAHVI). The Cytoplasmic segment spans residues 112–115 (LHEK). A helical membrane pass occupies residues 116 to 136 (LHTFGLLGCVLCVVGSITIVL). The Extracellular portion of the chain corresponds to 137–157 (HAPQEQEIDSVLQVWNLATEP). Residues 158–178 (AFLLYAAAVVGAAIILIVQFV) traverse the membrane as a helical segment. Topologically, residues 179-189 (PQYGQSHVMVY) are cytoplasmic. Residues 190–210 (IGVCSLVGSLSVMSVKALGIA) traverse the membrane as a helical segment. Topologically, residues 211–220 (LKLTFSGMNQ) are extracellular. Residues 221-241 (LIYPQTWVFTLIVLTCVITQM) form a helical membrane-spanning segment. Over 242 to 255 (NYLNKALDTFNTAV) the chain is Cytoplasmic. Residues 256 to 276 (VSPIYYVMFTSLTILASVIMF) traverse the membrane as a helical segment. Residues 277 to 283 (KDWDRQD) lie on the Extracellular side of the membrane. The helical transmembrane segment at 284–304 (GTQIVTELCGFVTILSGTFLL) threads the bilayer. Residues 305–368 (HKTKDMVDGS…ILPQDGPEAV (64 aa)) are Cytoplasmic-facing.

This sequence belongs to the NIPA (TC 2.A.7) family. In terms of assembly, homodimer.

It is found in the cell membrane. The protein resides in the early endosome. In terms of biological role, acts as a Mg(2+) transporter. Can also transport other divalent cations such as Fe(2+), Sr(2+), Ba(2+), Mn(2+) and Co(2+) but to a much less extent than Mg(2+). The protein is Probable magnesium transporter NIPA3 of Arabidopsis thaliana (Mouse-ear cress).